The following is a 399-amino-acid chain: tRNA-dihydrouridine(16/17) synthase [NAD(P)(+)] (399 aa).

FMN is bound by residues proline 24–valine 26 and glutamine 80. The active-site Proton donor is the cysteine 109. FMN is bound by residues lysine 148, histidine 176, asparagine 211–asparagine 213, and alanine 235–glutamate 236.

The protein belongs to the Dus family. Dus1 subfamily. The cofactor is FMN.

It is found in the nucleus. Its subcellular location is the mitochondrion. It carries out the reaction 5,6-dihydrouridine(16) in tRNA + NADP(+) = uridine(16) in tRNA + NADPH + H(+). The catalysed reaction is 5,6-dihydrouridine(16) in tRNA + NAD(+) = uridine(16) in tRNA + NADH + H(+). The enzyme catalyses 5,6-dihydrouridine(17) in tRNA + NAD(+) = uridine(17) in tRNA + NADH + H(+). It catalyses the reaction 5,6-dihydrouridine(17) in tRNA + NADP(+) = uridine(17) in tRNA + NADPH + H(+). It carries out the reaction a 5,6-dihydrouridine in mRNA + NAD(+) = a uridine in mRNA + NADH + H(+). The catalysed reaction is a 5,6-dihydrouridine in mRNA + NADP(+) = a uridine in mRNA + NADPH + H(+). Catalyzes the synthesis of dihydrouridine, a modified base found in the D-loop of most tRNAs. Also able to mediate dihydrouridylation of some mRNAs, thereby affecting their translation. This is tRNA-dihydrouridine(16/17) synthase [NAD(P)(+)] from Schizosaccharomyces pombe (strain 972 / ATCC 24843) (Fission yeast).